The primary structure comprises 150 residues: D-aminoacyl-tRNA deacylase (150 aa).

Residues 138-139 (GP) carry the Gly-cisPro motif, important for rejection of L-amino acids motif.

Belongs to the DTD family. Homodimer.

It localises to the cytoplasm. It catalyses the reaction glycyl-tRNA(Ala) + H2O = tRNA(Ala) + glycine + H(+). The catalysed reaction is a D-aminoacyl-tRNA + H2O = a tRNA + a D-alpha-amino acid + H(+). An aminoacyl-tRNA editing enzyme that deacylates mischarged D-aminoacyl-tRNAs. Also deacylates mischarged glycyl-tRNA(Ala), protecting cells against glycine mischarging by AlaRS. Acts via tRNA-based rather than protein-based catalysis; rejects L-amino acids rather than detecting D-amino acids in the active site. By recycling D-aminoacyl-tRNA to D-amino acids and free tRNA molecules, this enzyme counteracts the toxicity associated with the formation of D-aminoacyl-tRNA entities in vivo and helps enforce protein L-homochirality. This Akkermansia muciniphila (strain ATCC BAA-835 / DSM 22959 / JCM 33894 / BCRC 81048 / CCUG 64013 / CIP 107961 / Muc) protein is D-aminoacyl-tRNA deacylase.